Reading from the N-terminus, the 122-residue chain is Large ribosomal subunit protein uL14 (122 aa).

It belongs to the universal ribosomal protein uL14 family. In terms of assembly, part of the 50S ribosomal subunit. Forms a cluster with proteins L3 and L19. In the 70S ribosome, L14 and L19 interact and together make contacts with the 16S rRNA in bridges B5 and B8.

Functionally, binds to 23S rRNA. Forms part of two intersubunit bridges in the 70S ribosome. This is Large ribosomal subunit protein uL14 from Herminiimonas arsenicoxydans.